A 305-amino-acid chain; its full sequence is tRNA pseudouridine synthase B (305 aa).

The active-site Nucleophile is Asp50.

It belongs to the pseudouridine synthase TruB family. Type 1 subfamily.

It carries out the reaction uridine(55) in tRNA = pseudouridine(55) in tRNA. Functionally, responsible for synthesis of pseudouridine from uracil-55 in the psi GC loop of transfer RNAs. In Rhodococcus jostii (strain RHA1), this protein is tRNA pseudouridine synthase B.